Consider the following 138-residue polypeptide: Class I hydrophobin 3 (138 aa).

A signal peptide spans 1 to 16 (MRFFLAITALVAAVTA). Intrachain disulfides connect cysteine 40/cysteine 111, cysteine 48/cysteine 105, cysteine 49/cysteine 87, and cysteine 112/cysteine 130.

The protein belongs to the fungal hydrophobin family. In terms of assembly, self-assembles to form functional amyloid fibrils called rodlets. Self-assembly into fibrillar rodlets occurs spontaneously at hydrophobic:hydrophilic interfaces and the rodlets further associate laterally to form amphipathic monolayers.

The protein localises to the secreted. The protein resides in the cell wall. In terms of biological role, aerial growth, conidiation, and dispersal of filamentous fungi in the environment rely upon a capability of their secreting small amphipathic proteins called hydrophobins (HPBs) with low sequence identity. Class I can self-assemble into an outermost layer of rodlet bundles on aerial cell surfaces, conferring cellular hydrophobicity that supports fungal growth, development and dispersal; whereas Class II form highly ordered films at water-air interfaces through intermolecular interactions but contribute nothing to the rodlet structure. HYD3 is a class I hydrophobin that contributes to the formation of aerial hyphae and fruiting bodies. The sequence is that of Class I hydrophobin 3 from Cordyceps militaris (Caterpillar fungus).